The following is a 332-amino-acid chain: Heptahelical transmembrane protein 1 (332 aa).

The segment at 1–52 (MDQNGHNDEAETVSCGNGNCKSKIVPGDDHGGDESSGTKRRKKRKTQQKTMK) is disordered. Topologically, residues 1 to 98 (MDQNGHNDEA…VFSFHNESLN (98 aa)) are cytoplasmic. The segment covering 26-37 (PGDDHGGDESSG) has biased composition (basic and acidic residues). The segment covering 38–52 (TKRRKKRKTQQKTMK) has biased composition (basic residues). The chain crosses the membrane as a helical span at residues 99–119 (VWTHLIGFIFFVALTVANIIH). Topologically, residues 120–138 (HDGFFPVDAKSPGNVTRWP) are extracellular. Residues 139 to 159 (FFVFLGGSMFCLLASSICHLF) form a helical membrane-spanning segment. Over 160-172 (CCHSKELNVFLLR) the chain is Cytoplasmic. The chain crosses the membrane as a helical span at residues 173–193 (IDYAGITAMIITSFFPPIFYI). At 194–199 (FQCTPR) the chain is on the extracellular side. The chain crosses the membrane as a helical span at residues 200-220 (WYFIYLAGITSMGIFTIITLF). Residues 221–233 (TPSLSAPKYRAFR) lie on the Cytoplasmic side of the membrane. A helical membrane pass occupies residues 234 to 254 (ALLFASMGLFGIVPAAHALVV). Residues 255 to 262 (NWGNPQRN) are Extracellular-facing. The helical transmembrane segment at 263–283 (VTLVYELLMAVFYLVGTGFYV) threads the bilayer. Topologically, residues 284–303 (GRVPERLKPGWFDRVGHSHQ) are cytoplasmic. Residues 304-324 (IFHVFVLLGALSHYAAALLFL) traverse the membrane as a helical segment. Residues 325–332 (DWRDHVGC) are Extracellular-facing.

This sequence belongs to the ADIPOR family. As to quaternary structure, interacts (via N-terminus) with SCRM/ICE1. Expressed in roots, hypocotyls, vasculature of cotyledons and leaves, hydathodes and guard cells. In reproductive organs, expressed in trichomes, veins of sepals, stamens and stigmata of pistils.

It is found in the membrane. Its function is as follows. May act as a negative regulator of abscisic acid (ABA)-mediated osmotic stress signaling and function in cross-talk between cold and osmotic signaling. In Arabidopsis thaliana (Mouse-ear cress), this protein is Heptahelical transmembrane protein 1 (HHP1).